The primary structure comprises 131 residues: Single-stranded DNA-binding protein 2 (131 aa).

An SSB domain is found at 1–103; sequence MYNKVIMIGR…VLASSFQLLE (103 aa). The Important for interaction with partner proteins signature appears at 126–131; sequence EEELPF.

As to quaternary structure, homotetramer.

In terms of biological role, plays an important role in DNA replication, recombination and repair. Binds to ssDNA and to an array of partner proteins to recruit them to their sites of action during DNA metabolism. The chain is Single-stranded DNA-binding protein 2 (ssb2) from Streptococcus agalactiae serotype III (strain NEM316).